Consider the following 1843-residue polypeptide: Cilia- and flagella-associated protein 44 (1843 aa).

Residues 1–86 (MKEPDDQDTS…PPVEVKEEPE (86 aa)) are disordered. A compositionally biased stretch (polar residues) spans 29-39 (LKSSQDTTADS). The segment covering 41-58 (TDGEESYLGDDLDLDDMD) has biased composition (acidic residues). WD repeat units follow at residues 214-255 (GAEK…PILR), 258-297 (AFSQ…TGLK), 308-346 (TSTS…VELC), 353-390 (CHSG…TADV), 456-495 (FHSG…PLVH), 497-541 (KFKQ…GLTV), and 561-600 (PHTD…KPIG). Positions 701–726 (REAFGEEEIPEEETSEEGEEEEPPLP) are disordered. Residues 705 to 724 (GEEEIPEEETSEEGEEEEPP) are compositionally biased toward acidic residues. WD repeat units lie at residues 790–829 (TEDN…PFLV) and 842–881 (NNYG…IVPK). 3 disordered regions span residues 1040-1086 (YSKL…SVLE), 1266-1291 (QRKQ…SAGG), and 1488-1524 (KEVE…DDVF). Basic and acidic residues predominate over residues 1047 to 1071 (SQSERRQSKMERLEKEGPGKKESQR). Phosphoserine is present on S1069. A compositionally biased stretch (polar residues) spans 1072-1081 (DTGGSISLQE). A compositionally biased stretch (acidic residues) spans 1492–1524 (GDADEDEESEESSEEESSLESDEDASGSEDDVF). Coiled coils occupy residues 1548-1603 (RLDI…RLNE) and 1631-1665 (LVFS…CRER). Residues 1699–1744 (IDLEALQTLSVNTTLEELKIKKLRKELSNAKELRMWEEKIAQVRWD) form a WD 10 repeat.

Belongs to the CFAP44 family. In terms of tissue distribution, expressed in testis.

The protein resides in the cell projection. It localises to the cilium. It is found in the flagellum. The protein localises to the cytoplasm. Its subcellular location is the cytoskeleton. The protein resides in the flagellum axoneme. Its function is as follows. Flagellar protein involved in sperm flagellum axoneme organization and function. This Mus musculus (Mouse) protein is Cilia- and flagella-associated protein 44.